The following is a 318-amino-acid chain: MRFKGLDLNLLVALDALMTERKLTAAARSINLSQPAMSAAIGRLRAYFNDELFLMQQRRLVPTPRAEALAPAVREALLHIQLSVIAWDPLVPAESDRRFRIVLSDFMTLVFFEKVIKRVAREAPGVSFELLHVNDDPDERLRSGDLDFLILPDQFMSATHPSAKLFEDKLVCVGCPSNQQLRGKLSLKRFMSMGHVAAMFGRTLKPSIEQWLLLEHGFKRRVEIVVPGFNSIPMLLQGTNRIATLPLLLVRHFEPTIPLQIVDHPLPPLSFTEALQWPLLHNSDPGNIWMRNIILEEASRIETSSERCSQEPRATQSW.

One can recognise an HTH lysR-type domain in the interval 6–63; that stretch reads LDLNLLVALDALMTERKLTAAARSINLSQPAMSAAIGRLRAYFNDELFLMQQRRLVPT. Residues 23 to 42 constitute a DNA-binding region (H-T-H motif); the sequence is LTAAARSINLSQPAMSAAIG.

Belongs to the LysR transcriptional regulatory family.

Functionally, nodD regulates the expression of the nodABCFE genes which encode other nodulation proteins. NodD is also a negative regulator of its own expression. Binds flavonoids as inducers. This Rhizobium leguminosarum bv. trifolii protein is Nodulation protein D (nodD).